Consider the following 164-residue polypeptide: Glutamate uptake regulatory protein (164 aa).

The region spanning 5–66 is the HTH asnC-type domain; that stretch reads LDDFDIKILD…LLDPQKIGLG (62 aa). The H-T-H motif DNA-binding region spans 24 to 43; the sequence is MAELSEKTGLSANACWRRIR.

In terms of biological role, represses the secondary, H(+)-coupled glutamate uptake system (Gluemp) genes. The chain is Glutamate uptake regulatory protein (grp) from Zymomonas mobilis subsp. mobilis (strain ATCC 10988 / DSM 424 / LMG 404 / NCIMB 8938 / NRRL B-806 / ZM1).